The sequence spans 390 residues: ATP-sensitive inward rectifier potassium channel 11 (390 aa).

The Cytoplasmic portion of the chain corresponds to 1 to 65 (MLSRKGIIPE…LQDVFTTLVD (65 aa)). Residues Asn48 and Arg50 each coordinate ATP. Residues 66 to 92 (LKWTHTLLIFTMSFLCSWLLFAMVWWL) traverse the membrane as a helical segment. Topologically, residues 93-116 (IAFAHGDLAPGEGAAVPCVTSIHS) are extracellular. Cys110 and Cys142 form a disulfide bridge. Positions 117-133 (FSSAFLFSIEVQVTIGF) form an intramembrane region, discontinuously helical; Pore-forming. The K(+) site is built by Thr130 and Phe133. The Selectivity filter motif lies at 130 to 135 (TIGFGG). At 134-142 (GGRMVTEEC) the chain is on the extracellular side. The chain crosses the membrane as a helical span at residues 143-171 (PLAILILIVQNIVGLMINAIMLGCIFMKT). Residues 172-390 (AQAHRRAETL…KFSISPDSLS (219 aa)) are Cytoplasmic-facing. Arg176 contacts a 1,2-diacyl-sn-glycero-3-phospho-(1D-myo-inositol-4,5-bisphosphate). Residue Tyr330 coordinates ATP. Thr341 carries the phosphothreonine; by MAPK1 modification. At Ser385 the chain carries Phosphoserine; by MAPK1.

The protein belongs to the inward rectifier-type potassium channel (TC 1.A.2.1) family. KCNJ11 subfamily. As to quaternary structure, homotetramer; the homotetramer binds four ATP molecules (one ATP per subunit). Forms an heterooctamer with ABCC8/SUR1; one KCNJ11 homotetramer interacts with four ABCC8/SUR1 molecules. Interacts with ABCC9/SUR2. In terms of processing, phosphorylation by MAPK1 results in changes in channel gating that destabilize the closed states and reduce the ATP sensitivity.

It is found in the membrane. The enzyme catalyses K(+)(in) = K(+)(out). With respect to regulation, KATP channels are regulated by cytoplasmic ATP/ADP ratios; ATP inhibits the channel by closing the pore, while ADP activates the channel. Activated by phosphatidylinositol 4,5-biphosphate (PtdIns(4,5)P2). Its function is as follows. Inward rectifier potassium channel that forms the pore of ATP-sensitive potassium channels (KATP), regulating potassium permeability as a function of cytoplasmic ATP and ADP concentrations in many different cells. Inward rectifier potassium channels are characterized by a greater tendency to allow potassium to flow into the cell rather than out of it. Their voltage dependence is regulated by the concentration of extracellular potassium; as external potassium is raised, the voltage range of the channel opening shifts to more positive voltages. The inward rectification is mainly due to the blockage of outward current by internal magnesium. Can be blocked by extracellular barium. In pancreatic cells, it forms KATP channels with ABCC8/SUR1. Can form cardiac and smooth muscle-type KATP channels with ABCC9. The protein is ATP-sensitive inward rectifier potassium channel 11 (KCNJ11) of Oryctolagus cuniculus (Rabbit).